Consider the following 1203-residue polypeptide: Metabotropic glutamate receptor 5 (1203 aa).

Residues 1–18 form the signal peptide; sequence MVLLLILSVLLLKEDVRG. The Extracellular portion of the chain corresponds to 19–579; the sequence is SAQSSERRVV…QYLRWGDPEP (561 aa). An intrachain disulfide couples Cys57 to Cys99. L-glutamate is bound at residue Tyr64. Asn88 carries an N-linked (GlcNAc...) asparagine glycan. L-glutamate is bound by residues Ser151 and 172–174; that span reads SAT. N-linked (GlcNAc...) asparagine glycosylation is present at Asn209. L-glutamate is bound at residue Tyr222. 8 disulfide bridges follow: Cys240/Cys529, Cys275/Cys277, Cys364/Cys380, Cys418/Cys425, Cys510/Cys530, Cys514/Cys533, Cys536/Cys548, and Cys551/Cys564. Asp304 lines the L-glutamate pocket. Asn377 and Asn381 each carry an N-linked (GlcNAc...) asparagine glycan. Lys395 contributes to the L-glutamate binding site. Asn444 carries an N-linked (GlcNAc...) asparagine glycan. The chain crosses the membrane as a helical span at residues 580-602; it reads IAAVVFACLGLLATLFVTVIFII. The Cytoplasmic segment spans residues 603-612; that stretch reads YRDTPVVKSS. The helical transmembrane segment at 613-635 threads the bilayer; sequence SRELCYIILAGICLGYLCTFCLI. Residues 636–643 lie on the Extracellular side of the membrane; sequence AKPKQIYC. Cys643 and Cys732 are oxidised to a cystine. The helical transmembrane segment at 644-666 threads the bilayer; that stretch reads YLQRIGIGLSPAMSYSALVTKTN. Over 667-692 the chain is Cytoplasmic; sequence RIARILAGSKKKICTKKPRFMSACAQ. The chain crosses the membrane as a helical span at residues 693 to 713; sequence LVIAFILICIQLGIIVALFIM. Residues 714 to 736 lie on the Extracellular side of the membrane; it reads EPPDIMHDYPSIREVYLICNTTN. N-linked (GlcNAc...) asparagine glycosylation occurs at Asn733. A helical membrane pass occupies residues 737–758; the sequence is LGVVTPLGYNGLLILSCTFYAF. Over 759-771 the chain is Cytoplasmic; the sequence is KTRNVPANFNEAK. The helical transmembrane segment at 772 to 794 threads the bilayer; that stretch reads YIAFTMYTTCIIWLAFVPIYFGS. Over 795-797 the chain is Extracellular; it reads NYK. Residues 798–819 form a helical membrane-spanning segment; sequence IITMCFSVSLSATVALGCMFVP. Topologically, residues 820–1203 are cytoplasmic; the sequence is KVYIILAKPE…RDYTQSSSSL (384 aa). Phosphoserine is present on Ser860. An Omega-N-methylarginine modification is found at Arg868. 2 disordered regions span residues 892-1054 and 1120-1182; these read FTPK…GSLM and TGGA…ALCI. Residues 905-920 show a composition bias toward polar residues; it reads TMSSSNGKSVTWAQNE. An Omega-N-methylarginine modification is found at Arg924. Over residues 960-977 the composition is skewed to gly residues; the sequence is QGAGAGGGSGPGAAGAGS. Residues 1007–1019 are compositionally biased toward low complexity; sequence PAAARPRSPSPIS. Residues Ser1014 and Ser1016 each carry the phosphoserine modification. Polar residues-rich tracts occupy residues 1039-1054 and 1165-1176; these read HSET…GSLM and DSGSTTPNSPVS.

It belongs to the G-protein coupled receptor 3 family. The PPXXF motif binds HOMER1, HOMER2 and HOMER3. Interacts with RYR1, RYR2, ITPR1, SHANK1 and SHANK3. Interacts with SIAH1 and TAMALIN. Interacts with NCDN. Interacts with NECAB2. Interacts with CAMK2A.

The protein localises to the cell membrane. In terms of biological role, G-protein coupled receptor for glutamate. Ligand binding causes a conformation change that triggers signaling via guanine nucleotide-binding proteins (G proteins) and modulates the activity of down-stream effectors. Signaling activates a phosphatidylinositol-calcium second messenger system and generates a calcium-activated chloride current. Plays an important role in the regulation of synaptic plasticity and the modulation of the neural network activity. This is Metabotropic glutamate receptor 5 (Grm5) from Mus musculus (Mouse).